Consider the following 118-residue polypeptide: MNKIDFIEMEQMKKNIPVFRPGDTVKVHVKIVEGDKSRIQVFQGVVIGRQNGGIRESFTVRKISNGIGVERSFPLHSPSVDAIEVITRGQVRRAKLYYLRKLRGKASRIKEKKYVAGM.

The protein belongs to the bacterial ribosomal protein bL19 family.

In terms of biological role, this protein is located at the 30S-50S ribosomal subunit interface and may play a role in the structure and function of the aminoacyl-tRNA binding site. The protein is Large ribosomal subunit protein bL19 of Geotalea uraniireducens (strain Rf4) (Geobacter uraniireducens).